Here is a 72-residue protein sequence, read N- to C-terminus: uncharacterized protein (72 aa).

This is an uncharacterized protein from Escherichia coli O157:H7.